The chain runs to 255 residues: Geranylgeranylglyceryl phosphate synthase (255 aa).

Residues Asp34 and Thr64 each coordinate Mg(2+). Residues 182 to 188, 213 to 214, and 235 to 236 contribute to the sn-glycerol 1-phosphate site; these read YLEAGSG, GG, and GN.

The protein belongs to the GGGP/HepGP synthase family. Group II subfamily. Mg(2+) serves as cofactor.

It is found in the cytoplasm. The enzyme catalyses sn-glycerol 1-phosphate + (2E,6E,10E)-geranylgeranyl diphosphate = sn-3-O-(geranylgeranyl)glycerol 1-phosphate + diphosphate. It participates in membrane lipid metabolism; glycerophospholipid metabolism. Its function is as follows. Prenyltransferase that catalyzes the transfer of the geranylgeranyl moiety of geranylgeranyl diphosphate (GGPP) to the C3 hydroxyl of sn-glycerol-1-phosphate (G1P). This reaction is the first ether-bond-formation step in the biosynthesis of archaeal membrane lipids. This Saccharolobus islandicus (strain M.16.27) (Sulfolobus islandicus) protein is Geranylgeranylglyceryl phosphate synthase.